Consider the following 370-residue polypeptide: Putative agmatine deiminase (370 aa).

Catalysis depends on Cys361, which acts as the Amidino-cysteine intermediate.

This sequence belongs to the agmatine deiminase family.

It carries out the reaction agmatine + H2O = N-carbamoylputrescine + NH4(+). In Shewanella putrefaciens (strain CN-32 / ATCC BAA-453), this protein is Putative agmatine deiminase.